Here is an 871-residue protein sequence, read N- to C-terminus: CRISPR system Cmr subunit Cmr2 (871 aa).

A not required for target RNA cleavage region spans residues Met-1 to Ser-215. Mn(2+) is bound by residues His-13, Asp-14, and His-25. Cys-448, Cys-451, Cys-478, and Cys-481 together coordinate Zn(2+). Residues Lys-592–Leu-752 enclose the GGDEF domain. Positions 600, 656, 673, 674, 694, and 700 each coordinate Mn(2+).

The protein belongs to the CRISPR system Cmr2 family. In terms of assembly, part of the type III-B Cmr ribonucleoprotein (RNP) complex, an elongated RNP with Cmr2 and Cmr3 as the base, with Cmr4 and Cmr5 forming a helical core along the mature crRNA (39 or 45 nt in length), while the complex is capped by Cmr6 and Cmr1. The 5' end of the crRNA is bound to Cmr2 and Cmr3, while Cmr6 and a Cmr1 subunit (Cmr1-1 or Cmr1-2) cap the 3' end of the crRNA. The target RNA lies antiparallel to the crRNA, with its 5' end near Cmr1 and Cmr6 and its 3' end near Cmr2 and Cmr3; major target cleavage occurs nears the junction of Cmr1/Cmr6 and Cmr4/Cmr, with minor cleavage occurring at 6 nt intervals which coincide with the proposed spacing of Cmr4 subunits. Forms a 1:1 complex with Cmr3. The Cmr2-Cmr3 complex non-specifically binds ss-target RNA and crRNA. Interacts with Cmr3, Cmr4 and Cmr5. The cofactor is Ca(2+). Mn(2+) serves as cofactor. Requires Zn(2+) as cofactor.

Its subcellular location is the cytoplasm. CRISPR (clustered regularly interspaced short palindromic repeat), is an adaptive immune system that provides protection against mobile genetic elements (viruses, transposable elements and conjugative plasmids). CRISPR clusters contain sequences complementary to antecedent mobile elements and target invading nucleic acids. CRISPR clusters are transcribed and processed into CRISPR RNA (crRNA), formerly called psiRNA (prokaryotic silencing) in this organism. Part of the Cmr ribonucleoprotein complex which has divalent cation-dependent endoribonuclease activity specific for ssRNA complementary to the crRNA (target RNA), generating 5' hydroxy- and 3' phosphate or 2'-3' cyclic phosphate termini. Cmr4 is probably the subunit that cleaves target RNA. Cmr complex does not cleave ssDNA complementary to the crRNA. Cleavage of target RNA is guided by the crRNA; substrate cleavage occurs a fixed distance (14 nt) from the 3' end of the crRNA. In vitro reconstitution shows Cmr1-2 and Cmr5 are not absolutely necessary for target cleavage. This is CRISPR system Cmr subunit Cmr2 from Pyrococcus furiosus (strain ATCC 43587 / DSM 3638 / JCM 8422 / Vc1).